Here is a 646-residue protein sequence, read N- to C-terminus: Threonine--tRNA ligase (646 aa).

The TGS domain occupies 1–63 (MADLSIIFPD…SSGGSIEIIT (63 aa)). The tract at residues 244–541 (DHRKLGKELG…LIEEYKGAFP (298 aa)) is catalytic. Zn(2+) is bound by residues Cys337, His388, and His518.

The protein belongs to the class-II aminoacyl-tRNA synthetase family. Homodimer. Requires Zn(2+) as cofactor.

It localises to the cytoplasm. The enzyme catalyses tRNA(Thr) + L-threonine + ATP = L-threonyl-tRNA(Thr) + AMP + diphosphate + H(+). Catalyzes the attachment of threonine to tRNA(Thr) in a two-step reaction: L-threonine is first activated by ATP to form Thr-AMP and then transferred to the acceptor end of tRNA(Thr). Also edits incorrectly charged L-seryl-tRNA(Thr). This chain is Threonine--tRNA ligase, found in Oceanobacillus iheyensis (strain DSM 14371 / CIP 107618 / JCM 11309 / KCTC 3954 / HTE831).